Consider the following 319-residue polypeptide: Free fatty acid receptor 3 (319 aa).

Residues 1–15 (MGTSFFLGNYWLFFS) are Extracellular-facing. A helical transmembrane segment spans residues 16-36 (VYLLVFLVGLPLNVMALVVFV). The Cytoplasmic segment spans residues 37 to 43 (GKLRRRP). Residues 44-64 (VAVDLLLLNLTISDLLLLLFL) form a helical membrane-spanning segment. Topologically, residues 65-98 (PFRMVEAACGMRWLLPFIFCPLSGFLFFTTIYLT) are extracellular. Cys-84 and Cys-165 are oxidised to a cystine. A helical membrane pass occupies residues 99-119 (SLFLTAVSIERFLSVAYPLWY). The Cytoplasmic portion of the chain corresponds to 120-127 (KTRPRLAQ). A helical membrane pass occupies residues 128–148 (AGLVSVVCWFLASAHCSVVYI). Topologically, residues 149-183 (TEYWGNATYSQGTNGTCYLEFREDQLAILLPVRLE) are extracellular. N-linked (GlcNAc...) asparagine glycans are attached at residues Asn-154 and Asn-162. The chain crosses the membrane as a helical span at residues 184–206 (MAVVLFMVPLCITSYCYSRLVWI). The Cytoplasmic segment spans residues 207-218 (LSRGASRRRRKR). Residues 219 to 239 (IMGLLAATLLIFFVCFGPYNM) traverse the membrane as a helical segment. Residues 240–254 (SHVVGYVSRESPSWR) are Extracellular-facing. A helical transmembrane segment spans residues 255 to 275 (SYVLLLSTLNSCIDPLVFYFS). Residues 276-319 (SSKFQADFHQLLGRLLRTCVPWTQQVSLELKVKNGEEPSKECPS) are Cytoplasmic-facing.

It belongs to the G-protein coupled receptor 1 family. In terms of tissue distribution, expressed in white adipose tissue and skeletal muscle (at protein level). Abundantly expressed in sympathetic ganglia such as the superior cervical ganglion. Also expressed by intestinal endocrine cells.

Its subcellular location is the cell membrane. Functionally, g protein-coupled receptor that is activated by a major product of dietary fiber digestion, the short chain fatty acids (SCFAs), and that plays a role in the regulation of whole-body energy homeostasis and in intestinal immunity. In omnivorous mammals, the short chain fatty acids acetate, propionate and butyrate are produced primarily by the gut microbiome that metabolizes dietary fibers. SCFAs serve as a source of energy but also act as signaling molecules. That G protein-coupled receptor is probably coupled to the pertussis toxin-sensitive, G(i/o)-alpha family of G proteins. Its activation results in the formation of inositol 1,4,5-trisphosphate, the mobilization of intracellular calcium, the phosphorylation of the MAPK3/ERK1 and MAPK1/ERK2 kinases and the inhibition of intracellular cAMP accumulation. Activated by SCFAs and by beta-hydroxybutyrate, a ketone body produced by the liver upon starvation, it inhibits N-type calcium channels and modulates the activity of sympathetic neurons through a signaling cascade involving the beta and gamma subunits of its coupled G protein, phospholipase C and MAP kinases. Thereby, it may regulate energy expenditure through the control of the sympathetic nervous system that controls for instance heart rate. Upon activation by SCFAs accumulating in the intestine, it may also signal to the brain via neural circuits which in turn would regulate intestinal gluconeogenesis. May also control the production of hormones involved in whole-body energy homeostasis. May for instance, regulate blood pressure through renin secretion. May also regulate secretion of the PYY peptide by enteroendocrine cells and control gut motility, intestinal transit rate, and the harvesting of energy from SCFAs produced by gut microbiota. May also indirectly regulate the production of LEP/Leptin, a hormone acting on the CNS to inhibit food intake, in response to the presence of short-chain fatty acids in the intestine. Finally, may also play a role in glucose homeostasis. Besides its role in energy homeostasis, may play a role in intestinal immunity. May mediate the activation of the inflammatory and immune response by SCFAs in the gut, regulating the rapid production of chemokines and cytokines by intestinal epithelial cells. Exhibits an SCFA-independent constitutive G protein-coupled receptor activity. The chain is Free fatty acid receptor 3 (Ffar3) from Mus musculus (Mouse).